The primary structure comprises 258 residues: 5'-nucleotidase SurE (258 aa).

Residues aspartate 8, aspartate 9, serine 40, and asparagine 93 each contribute to the a divalent metal cation site.

It belongs to the SurE nucleotidase family. Requires a divalent metal cation as cofactor.

Its subcellular location is the cytoplasm. The enzyme catalyses a ribonucleoside 5'-phosphate + H2O = a ribonucleoside + phosphate. Its function is as follows. Nucleotidase that shows phosphatase activity on nucleoside 5'-monophosphates. The protein is 5'-nucleotidase SurE of Afipia carboxidovorans (strain ATCC 49405 / DSM 1227 / KCTC 32145 / OM5) (Oligotropha carboxidovorans).